The sequence spans 440 residues: Glutamate--tRNA ligase 2 (440 aa).

A 'HIGH' region motif is present at residues 8–18 (PSPTGYLHVGN). Positions 239–243 (ALSKR) match the 'KMSKS' region motif. Residue K242 participates in ATP binding.

It belongs to the class-I aminoacyl-tRNA synthetase family. Glutamate--tRNA ligase type 1 subfamily. In terms of assembly, monomer.

It localises to the cytoplasm. The enzyme catalyses tRNA(Glu) + L-glutamate + ATP = L-glutamyl-tRNA(Glu) + AMP + diphosphate. Catalyzes the attachment of glutamate to tRNA(Glu) in a two-step reaction: glutamate is first activated by ATP to form Glu-AMP and then transferred to the acceptor end of tRNA(Glu). This Dinoroseobacter shibae (strain DSM 16493 / NCIMB 14021 / DFL 12) protein is Glutamate--tRNA ligase 2.